Here is an 872-residue protein sequence, read N- to C-terminus: Lysosomal cholesterol signaling protein (872 aa).

Residues 1–40 lie on the Lumenal side of the membrane; that stretch reads MNSFSNLPAENLTIAVNMTKTLPTAVMHGFNSTNDPPSMS. The tract at residues 3-372 is PIN-like transporter; it reads SFSNLPAENL…SAWLLTFPTM (370 aa). N-linked (GlcNAc...) asparagine glycans are attached at residues N11, N17, and N31. Residues 41–61 form a helical membrane-spanning segment; sequence ITRLFPALLECFGIVLCGYIA. Cholesterol-binding residues include F45 and Y59. Over 62 to 81 the chain is Cytoplasmic; that stretch reads GRANVITSTQAKGLGNFVSR. Residues 82–102 form a helical membrane-spanning segment; it reads FALPALLFKNMVVLNFSNVDW. The Lumenal segment spans residues 103-106; sequence SFLY. The helical transmembrane segment at 107 to 127 threads the bilayer; sequence SILIAKASVFFIVCVLTLLVA. At 128 to 135 the chain is on the cytoplasmic side; the sequence is SPDSRFSK. A discontinuously helical transmembrane segment spans residues 136 to 156; sequence AGLFPIFATQSNDFALGYPIV. Residues 157 to 169 lie on the Lumenal side of the membrane; it reads EALYQTTYPEYLQ. Residues 170 to 190 form a helical membrane-spanning segment; the sequence is YIYLVAPISLMMLNPIGFIFC. The Cytoplasmic portion of the chain corresponds to 191–215; that stretch reads EIQKWKDTQNASQNKIKIVGLGLLR. Residues 216–236 form a discontinuously helical membrane-spanning segment; sequence VLQNPIVFMVFIGIAFNFILD. At 237–245 the chain is on the lumenal side; it reads RKVPVYVEN. Residues 246 to 266 form a discontinuously helical membrane-spanning segment; the sequence is FLDGLGNSFSGSALFYLGLTM. The Cytoplasmic portion of the chain corresponds to 267–275; the sequence is VGKIKRLKK. Cholesterol contacts are provided by G268, K269, and I270. A helical transmembrane segment spans residues 276–296; it reads SAFVVLILLITAKLLVLPLLC. At 297 to 317 the chain is on the lumenal side; sequence REMVELLDKGDSVVNHTSLSN. N311 carries N-linked (GlcNAc...) asparagine glycosylation. Residues 318–338 form a discontinuously helical membrane-spanning segment; that stretch reads YAFLYGVFPVAPGVAIFATQF. Topologically, residues 339–348 are cytoplasmic; that stretch reads NMEVEIITSG. The chain crosses the membrane as a helical span at residues 349–369; sequence MVISTFVSAPIMYVSAWLLTF. At 370 to 383 the chain is on the lumenal side; it reads PTMDPKPLAYAIQN. The GPCR stretch occupies residues 382 to 719; it reads QNVSFDISIV…FGIFGLDKHL (338 aa). N-linked (GlcNAc...) asparagine glycosylation is present at N383. The helical transmembrane segment at 384–404 threads the bilayer; the sequence is VSFDISIVSLISLIWSQAILL. Residues 405–416 are Cytoplasmic-facing; sequence LSKKYKQLPHML. The helical transmembrane segment at 417-437 threads the bilayer; the sequence is TTNLLIAQSIVCAGMMIWNFV. Residues 438 to 440 lie on the Lumenal side of the membrane; the sequence is KEK. A helical transmembrane segment spans residues 441–461; sequence NFVGQILVFVLLYSSLYSTYL. Topologically, residues 462–482 are cytoplasmic; it reads WTGLLAISLFLLKKRERVQIP. A helical membrane pass occupies residues 483-503; it reads VGIIIISGWGIPALLVGVLLI. Topologically, residues 504–522 are lumenal; it reads TGKHSGDSIDSAFFYGKEQ. A helical transmembrane segment spans residues 523–543; the sequence is MITTAVTLFCSILIAGISLMC. The Cytoplasmic portion of the chain corresponds to 544–662; that stretch reads MNRTAQAGSY…GDQQLTRHVL (119 aa). A cholesterol-binding site is contributed by R659. The chain crosses the membrane as a helical span at residues 663–683; the sequence is LCLLLIIGLFANLSSCLWWLF. Over 684–693 the chain is Lumenal; the sequence is NQEPGRLYVE. A helical membrane pass occupies residues 694 to 714; the sequence is LQFFCAVFNFGQGFISFGIFG. The Cytoplasmic portion of the chain corresponds to 715 to 872; sequence LDKHLIILPF…SSPPSHSPKT (158 aa). The region spanning 759–837 is the DEP domain; sequence YHRDLCIRNI…DEYLFYRFLQ (79 aa).

Homodimer; via the transporter region and DEP domain. Interacts with the GATOR1 complex; preventing interaction between GATOR1 and KICSTOR; interaction is disrupted upon cholesterol starvation.

The protein localises to the lysosome membrane. Functionally, cholesterol-binding protein that acts as a regulator of mTORC1 signaling pathway. Acts as a sensor of cholesterol to signal cholesterol sufficiency to mTORC1: in presence of cholesterol, binds cholesterol, leading to disruption of the interaction between the GATOR1 and KICSTOR complexes and promotion of mTORC1 signaling. Upon cholesterol starvation, GPR155/LYCHOS is unable to perturb the association between GATOR1 and KICSTOR, leading to mTORC1 signaling inhibition. Binds indole-3-acetic acid and may play a role in tryptophan metabolism. The polypeptide is Lysosomal cholesterol signaling protein (GPR155) (Pongo abelii (Sumatran orangutan)).